The primary structure comprises 298 residues: Formamidopyrimidine-DNA glycosylase (298 aa).

Pro-2 (schiff-base intermediate with DNA) is an active-site residue. Glu-3 (proton donor) is an active-site residue. Lys-58 acts as the Proton donor; for beta-elimination activity in catalysis. Positions 106, 128, and 171 each coordinate DNA. Residues 262-298 (SVYDQEGQPCRTPGCGGTVERVVQAGRSTFYCAACQK) form an FPG-type zinc finger. Arg-288 acts as the Proton donor; for delta-elimination activity in catalysis.

It belongs to the FPG family. As to quaternary structure, monomer. The cofactor is Zn(2+).

The catalysed reaction is Hydrolysis of DNA containing ring-opened 7-methylguanine residues, releasing 2,6-diamino-4-hydroxy-5-(N-methyl)formamidopyrimidine.. It catalyses the reaction 2'-deoxyribonucleotide-(2'-deoxyribose 5'-phosphate)-2'-deoxyribonucleotide-DNA = a 3'-end 2'-deoxyribonucleotide-(2,3-dehydro-2,3-deoxyribose 5'-phosphate)-DNA + a 5'-end 5'-phospho-2'-deoxyribonucleoside-DNA + H(+). Involved in base excision repair of DNA damaged by oxidation or by mutagenic agents. Acts as a DNA glycosylase that recognizes and removes damaged bases. Has a preference for oxidized purines, such as 7,8-dihydro-8-oxoguanine (8-oxoG). Has AP (apurinic/apyrimidinic) lyase activity and introduces nicks in the DNA strand. Cleaves the DNA backbone by beta-delta elimination to generate a single-strand break at the site of the removed base with both 3'- and 5'-phosphates. The sequence is that of Formamidopyrimidine-DNA glycosylase (mutM) from Agrobacterium fabrum (strain C58 / ATCC 33970) (Agrobacterium tumefaciens (strain C58)).